Reading from the N-terminus, the 164-residue chain is Large ribosomal subunit protein bL9 (164 aa).

It belongs to the bacterial ribosomal protein bL9 family.

In terms of biological role, binds to the 23S rRNA. The protein is Large ribosomal subunit protein bL9 of Borrelia hermsii (strain HS1 / DAH).